The following is a 1673-amino-acid chain: AF4/FMR2 family member lilli (1673 aa).

Disordered regions lie at residues 1–24 (MAQQQQQQMQQQQQHHTSSINNNN), 54–80 (YSQNYNMEEYERRKRREREKIERQQGI), 125–302 (SRSA…PPEK), 407–534 (QLPP…GAQN), 575–604 (VGTGSGSGGTLSSGGSSSNKTPSPTESNKW), 722–1086 (RLSD…INTL), 1114–1133 (QGKLDAAAQPSAPQAPPAAP), 1141–1160 (RMTPTQQQQLGAGLASPART), and 1187–1315 (KLTP…MGKE). Residues 71 to 80 (REKIERQQGI) are compositionally biased toward basic and acidic residues. 2 stretches are compositionally biased toward low complexity: residues 146 to 180 (SLGHSPSSASSAAGPTAASATTSLPGQQQHYQQQQ) and 223 to 244 (PRTSSSNSNSSSVTNNASSGGV). Thr-420 is modified (phosphothreonine). The segment covering 428–441 (LKTEKNHSLEKQDS) has biased composition (basic and acidic residues). A compositionally biased stretch (acidic residues) spans 443–454 (LENDLELSESED). 2 positions are modified to phosphoserine: Ser-450 and Ser-452. Positions 465–486 (GNSSNSSESDSSESGSESSSKN) are enriched in low complexity. Positions 491–500 (HPNHQQHHHQ) are enriched in basic residues. Over residues 501–525 (LQQQQQQQQATMQQQQVLQQQHRSQ) the composition is skewed to low complexity. Residues 577–586 (TGSGSGGTLS) are compositionally biased toward gly residues. A compositionally biased stretch (polar residues) spans 594–604 (KTPSPTESNKW). The segment covering 724-757 (SDSGTSASGSSSSSSSSSDSAMGGEVVPMPGPGE) has biased composition (low complexity). Residues 775-788 (QPTQSQKAPPSNSV) show a composition bias toward polar residues. The span at 802 to 812 (QRQKKPRKKKA) shows a compositional bias: basic residues. Phosphoserine is present on residues Ser-821 and Ser-822. The segment at residues 851 to 863 (KKGRGRPRKQQQS) is a DNA-binding region (a.T hook). Residues 860–898 (QQQSGGSGNLSSASAGSSSQTKGPTLTAAKKPLAKTPLA) show a composition bias toward low complexity. Ser-871 and Ser-873 each carry phosphoserine. Polar residues predominate over residues 909 to 919 (SQSSSNGNTPT). Low complexity-rich tracts occupy residues 949–965 (SSSAESSSKSSSSSSSS) and 993–1004 (GSGSSSPSSSGS). Polar residues predominate over residues 1011–1022 (TRSQVGSGQALA). Residues 1034–1060 (SQHSQHLSSSDCSSSSGGCTAVCSSSS) show a composition bias toward low complexity. Positions 1065-1082 (EGRREKERERKPKSDKNK) are enriched in basic and acidic residues. Over residues 1190-1205 (PAQQNGHLTPKDQATN) the composition is skewed to polar residues. Composition is skewed to basic and acidic residues over residues 1226–1243 (EHPVKPEPELDAGYEAKF) and 1252–1282 (FQLKQERDRDRERERERERERERDREREQPP). A Phosphoserine modification is found at Ser-1362. The residue at position 1364 (Thr-1364) is a Phosphothreonine. Over residues 1564 to 1583 (NTPSSISPSNSVGSQGSGSN) the composition is skewed to low complexity. The disordered stretch occupies residues 1564–1588 (NTPSSISPSNSVGSQGSGSNTPPGR).

This sequence belongs to the AF4 family. In terms of assembly, component of the super elongation complex (SEC), at least composed of Ell, Cdk9, cyclin-T (CycT), lilli and ear.

Its subcellular location is the nucleus. Its function is as follows. Has a role in transcriptional regulation. Acts in parallel with the Ras/MAPK and the PI3K/PKB pathways in the control of cell identity and cellular growth. Essential for regulation of the cytoskeleton and cell growth but not for cell proliferation or growth rate. Required specifically for the microtubule-based basal transport of lipid droplets. Plays a partially redundant function downstream of Raf in cell fate specification in the developing eye. Pair-rule protein that regulates embryonic cellularization, gastrulation and segmentation. The chain is AF4/FMR2 family member lilli from Drosophila melanogaster (Fruit fly).